A 324-amino-acid polypeptide reads, in one-letter code: Glyoxylate/hydroxypyruvate reductase B (324 aa).

Catalysis depends on residues arginine 237 and glutamate 266. Catalysis depends on histidine 285, which acts as the Proton donor.

The protein belongs to the D-isomer specific 2-hydroxyacid dehydrogenase family. GhrB subfamily. As to quaternary structure, homodimer.

It localises to the cytoplasm. The enzyme catalyses glycolate + NADP(+) = glyoxylate + NADPH + H(+). It carries out the reaction (R)-glycerate + NAD(+) = 3-hydroxypyruvate + NADH + H(+). The catalysed reaction is (R)-glycerate + NADP(+) = 3-hydroxypyruvate + NADPH + H(+). Its function is as follows. Catalyzes the NADPH-dependent reduction of glyoxylate and hydroxypyruvate into glycolate and glycerate, respectively. This Shigella boydii serotype 18 (strain CDC 3083-94 / BS512) protein is Glyoxylate/hydroxypyruvate reductase B.